The chain runs to 336 residues: 3-isopropylmalate dehydrogenase (336 aa).

Substrate-binding residues include Arg87, Arg97, Arg121, and Asp211. Mg(2+) contacts are provided by Asp211, Asp235, and Asp239. 271–283 (GSAPDIAGQGIAD) serves as a coordination point for NAD(+).

Belongs to the isocitrate and isopropylmalate dehydrogenases family. LeuB type 2 subfamily. Homodimer. It depends on Mg(2+) as a cofactor. The cofactor is Mn(2+).

It is found in the cytoplasm. The enzyme catalyses (2R,3S)-3-isopropylmalate + NAD(+) = 4-methyl-2-oxopentanoate + CO2 + NADH. Its pathway is amino-acid biosynthesis; L-leucine biosynthesis; L-leucine from 3-methyl-2-oxobutanoate: step 3/4. Catalyzes the oxidation of 3-carboxy-2-hydroxy-4-methylpentanoate (3-isopropylmalate) to 3-carboxy-4-methyl-2-oxopentanoate. The product decarboxylates to 4-methyl-2 oxopentanoate. The protein is 3-isopropylmalate dehydrogenase of Mycobacterium leprae (strain Br4923).